A 206-amino-acid polypeptide reads, in one-letter code: MAVKKIAIFGATGQTGLTTLAQAVQAGYEVTVLVRDSSRLPSEGPRPAHVVVGDVLQAADVDKTVAGQDAVIVLLGTRNDLSPTTVMSEGARNIVAAMKAHGVDKVVACTSAFLLWDPTKVPPRLQAVTDDHIRMHKVLRESGLKYVAVMPPHIGDQPLTGAYTVTLDGRGPSRVISKHDLGHFMLRCLTTDEYDGHSTYPSHQYQ.

NADP(+) contacts are provided by G10, T12, G13, Q14, T15, R35, S38, and R39. Position 42 is a phosphoserine (S42). NADP(+) is bound by residues D54, V55, L75, G76, and R78. Phosphoserine is present on S82. M87, C109, H132, H153, and I154 together coordinate NADP(+). The active-site S-nitroso-cysteine intermediate; for S-nitroso-CoA-dependent nitrosyltransferase activity is the C109. The active-site S-nitroso-cysteine intermediate; for S-nitroso-CoA-dependent nitrosyltransferase activity is C188.

It belongs to the BLVRB family. Monomer. In terms of tissue distribution, predominantly expressed in liver and erythrocytes. At lower levels in heart, lung, adrenal gland and cerebrum. Expressed in adult red blood cells.

It is found in the cytoplasm. The catalysed reaction is reduced riboflavin + NADP(+) = riboflavin + NADPH + 2 H(+). It catalyses the reaction bilirubin IXbeta + NADP(+) = biliverdin IXbeta + NADPH + H(+). The enzyme catalyses FMNH2 + NAD(+) = FMN + NADH + 2 H(+). It carries out the reaction FMNH2 + NADP(+) = FMN + NADPH + 2 H(+). The catalysed reaction is S-nitroso-CoA + L-cysteinyl-[protein] = S-nitroso-L-cysteinyl-[protein] + CoA. It catalyses the reaction L-cysteinyl-[SCAN] + S-nitroso-CoA = S-nitroso-L-cysteinyl-[SCAN] + CoA. The enzyme catalyses S-nitroso-L-cysteinyl-[SCAN] + L-cysteinyl-[protein] = L-cysteinyl-[SCAN] + S-nitroso-L-cysteinyl-[protein]. Mesobiliverdin acts as a competitive inhibitor for flavin reduction, indicating that flavin and tetrapyrrole substrates compete for the same site. Inhibited by a wide range of xanthene-based drugs, such as phloxine B, erythrosin B, tamibarotene, sulfasalazine, olsalazine, febuxostat, ataluren (PTC124) and deferasirox. Functionally, enzyme that can both act as a NAD(P)H-dependent reductase and a S-nitroso-CoA-dependent nitrosyltransferase. Promotes fetal heme degradation during development. Also expressed in adult tissues, where it acts as a regulator of hematopoiesis, intermediary metabolism (glutaminolysis, glycolysis, TCA cycle and pentose phosphate pathway) and insulin signaling. Has a broad specificity oxidoreductase activity by catalyzing the NAD(P)H-dependent reduction of a variety of flavins, such as riboflavin, FAD or FMN, biliverdins, methemoglobin and PQQ (pyrroloquinoline quinone). Contributes to fetal heme catabolism by catalyzing reduction of biliverdin IXbeta into bilirubin IXbeta in the liver. Biliverdin IXbeta, which constitutes the major heme catabolite in the fetus is not present in adult. Does not reduce bilirubin IXalpha. Can also reduce the complexed Fe(3+) iron to Fe(2+) in the presence of FMN and NADPH. Acts as a protein nitrosyltransferase by catalyzing nitrosylation of cysteine residues of target proteins, such as HMOX2, INSR and IRS1. S-nitroso-CoA-dependent nitrosyltransferase activity is mediated via a 'ping-pong' mechanism: BLVRB first associates with both S-nitroso-CoA and protein substrate, nitric oxide group is then transferred from S-nitroso-CoA to Cys-109 and Cys-188 residues of BLVRB and from S-nitroso-BLVRB to the protein substrate. Inhibits insulin signaling by mediating nitrosylation of INSR and IRS1, leading to their inhibition. The chain is Flavin reductase (NADPH) from Homo sapiens (Human).